The chain runs to 793 residues: MGIGSKILENNIQKSISLGFYHSHSELRKSFYEFFKSKNHEILRSSSVIPDENDGTLLFTNAGMNQFKPLILSSTESRRVANIQKCIRAGGKHNDLDDVGKDLHHQTFFEMMGNWSFNDAFSKEEACRYAWEYLVEILGINADRLYVSYFGGIEKLGLPEDRECREIWKRIGVSSNRILPFVAENFWEMGAAGPCGPCTEIHYDRIGGRDASRLVNIDDSVVEIWNIVFMSSVRDSCGQIRHLGKNHIDTGMGFERLLSVVQNKTSNFDTDVFTPILEKTSELAKKQYTGSLDSRQDATFRLVADHIRAATVAISDGAVPDGTGCGFIVRKMMRRAFLQGISKLGIERYAMSELVPVVASTMKEVYPEIHDTSTHIRKIFNDEEAQFWKTVDKAKKMFDSVAAESKSPIISGRKAFNLFETHGLPLAVTVELARNIGREVDETEFERCRLEAQKVSQKASQFKLPISADDFPSHSDKEKYSYVFRNGKYEFPQVKTRILQVYKDQQKAESLEANDRGFLVLEECQFYGEQGGQTSDTGHLLIDGREVFEVENAKKIAGGAVTVLFGRALLPIRRDLRVEQKLDETRREGVMRAHSATHLLNWALQKLGVGSGQKGSSVDCDRFRFDYSTGDEDLSKEQRTELLIKCEMKMREFIQNGGFTEIIETSLEEAKKIENLQSDVKEDRIGGASVRVVALGSGADVPVECCSGTHIHDVRVIDDVAIMSDKSMGQRLRRIIVLTGKEAAACRNYTKSIYEDLRSTDPKERSKTGKNIDWKRVPIADQARISILLKQKK.

ATP is bound by residues R88, W187, and 224-226 (IWN). L-alanine is bound by residues N226 and D249. G253 lines the ATP pocket. Residues H594, H598, C706, and H710 each coordinate Zn(2+).

Belongs to the class-II aminoacyl-tRNA synthetase family. Monomer. Requires Zn(2+) as cofactor.

It is found in the mitochondrion. It carries out the reaction tRNA(Ala) + L-alanine + ATP = L-alanyl-tRNA(Ala) + AMP + diphosphate. Catalyzes the attachment of alanine to tRNA(Ala) in a two-step reaction: alanine is first activated by ATP to form Ala-AMP and then transferred to the acceptor end of tRNA(Ala). Also edits incorrectly charged tRNA(Ala) via its editing domain. The protein is Alanine--tRNA ligase, mitochondrial of Caenorhabditis elegans.